The chain runs to 199 residues: uncharacterized protein (199 aa).

Transmembrane regions (helical) follow at residues 35–55 (CELA…IFYD), 57–77 (FVIF…YLEF), 94–114 (LSAA…IFFG), and 131–151 (YYGC…ASFA).

It localises to the membrane. This is an uncharacterized protein from Caenorhabditis elegans.